A 60-amino-acid chain; its full sequence is Metallothionein A (60 aa).

The segment at 1-28 (MDPCDCSKSGTCNCGGSCTCTNCSCKSC) is beta. A divalent metal cation is bound by residues cysteine 4, cysteine 6, cysteine 12, cysteine 14, cysteine 18, cysteine 20, cysteine 23, cysteine 25, cysteine 28, cysteine 32, cysteine 33, cysteine 35, cysteine 36, cysteine 40, cysteine 43, cysteine 47, cysteine 49, cysteine 54, cysteine 58, and cysteine 59. The segment at 29–60 (KKSCCPCCPSGCTKCASGCVCKGKTCDTSCCQ) is alpha.

The protein belongs to the metallothionein superfamily. Type 1 family.

Metallothioneins have a high content of cysteine residues that bind various heavy metals. This chain is Metallothionein A (mta), found in Chionodraco hamatus (Antarctic teleost icefish).